A 587-amino-acid polypeptide reads, in one-letter code: Proteasome-associated ATPase (587 aa).

Positions 1-94 form a coiled coil; that stretch reads MAARDDAEAR…KEEVDRLAQP (94 aa). Residue 276–281 coordinates ATP; sequence GCGKTL. The docks into pockets in the proteasome alpha-ring stretch occupies residues 586-587; that stretch reads YL.

The protein belongs to the AAA ATPase family. As to quaternary structure, homohexamer. Assembles into a hexameric ring structure that caps the 20S proteasome core. Strongly interacts with the prokaryotic ubiquitin-like protein Pup through a hydrophobic interface; the interacting region of ARC lies in its N-terminal coiled-coil domain. There is one Pup binding site per ARC hexamer ring. Upon ATP-binding, the C-terminus of ARC interacts with the alpha-rings of the proteasome core, possibly by binding to the intersubunit pockets.

It participates in protein degradation; proteasomal Pup-dependent pathway. In terms of biological role, ATPase which is responsible for recognizing, binding, unfolding and translocation of pupylated proteins into the bacterial 20S proteasome core particle. May be essential for opening the gate of the 20S proteasome via an interaction with its C-terminus, thereby allowing substrate entry and access to the site of proteolysis. Thus, the C-termini of the proteasomal ATPase may function like a 'key in a lock' to induce gate opening and therefore regulate proteolysis. This is Proteasome-associated ATPase from Streptosporangium roseum (strain ATCC 12428 / DSM 43021 / JCM 3005 / KCTC 9067 / NCIMB 10171 / NRRL 2505 / NI 9100).